A 487-amino-acid polypeptide reads, in one-letter code: Alpha-1,4-L-rhamnosidase (487 aa).

A signal peptide spans 1–30 (MKNKKRLCHILKYIITCFLFGVIFIIPIQA). The Proton donor role is filled by E199.

The protein belongs to the glycosyl hydrolase 39 family.

It is found in the periplasm. In terms of biological role, alpha-rhamnosidase involved in ulvan degradation. Ulvan is the main polysaccharide component of the Ulvales (green seaweed) cell wall. It is composed of disaccharide building blocks comprising 3-sulfated rhamnose (Rha3S) linked to D-glucuronic acid (GlcA), L-iduronic acid (IduA), or D-xylose (Xyl). Endo-acting alpha-1,4-L-rhamnosidase cleaves rhamnose sections interspersed between xylose residues within the polymer, degrading larger oligomers with consecutive Xyl-Rha3S units that are resistant to the ulvan lyases and producing dimers Xyl-Rha3S and Xyl2S-Rha3S as the smallest products. This Formosa agariphila (strain DSM 15362 / KCTC 12365 / LMG 23005 / KMM 3901 / M-2Alg 35-1) protein is Alpha-1,4-L-rhamnosidase.